Consider the following 823-residue polypeptide: Dimethyl sulfoxide/trimethylamine N-oxide reductase (823 aa).

The tat-type signal signal peptide spans 1 to 42 (MTKFSGNELRAELYRRAFLSYSVAPGALGMFGRSLLAKGARA). Mo-bis(molybdopterin guanine dinucleotide) is bound by residues 156–160 (YGWKS), W158, S189, 232–233 (KT), 262–263 (ID), 283–285 (QTD), 364–365 (WS), R368, N476, H480, 500–501 (HD), R523, D553, 685–686 (HP), 691–693 (HSQ), N779, and 796–797 (GQ).

Homodimer. Requires Mo-bis(molybdopterin guanine dinucleotide) as cofactor. Predicted to be exported by the Tat system. The position of the signal peptide cleavage has been experimentally proven.

It localises to the periplasm. It catalyses the reaction dimethyl sulfide + a menaquinone + H2O = dimethyl sulfoxide + a menaquinol. It carries out the reaction trimethylamine + 2 Fe(III)-[cytochrome c] + H2O = trimethylamine N-oxide + 2 Fe(II)-[cytochrome c] + 3 H(+). In terms of biological role, catalyzes the reduction of dimethyl sulfoxide (DMSO) and trimethylamine N-oxide (TMAO) to dimethyl sulfide (DMS) and trimethylamine, respectively. The terminal DMSO reductase can also use various sulfoxides and N-oxide compounds as terminal electron acceptor in addition to DMSO and TMAO. This is Dimethyl sulfoxide/trimethylamine N-oxide reductase (dorA) from Rhodobacter capsulatus (Rhodopseudomonas capsulata).